Here is a 459-residue protein sequence, read N- to C-terminus: Glycosyl hydrolase family 109 protein 1 (459 aa).

Positions 1–31 form a signal peptide, tat-type signal; it reads MHNIHRRHFLKAAGAVTAGLVTANIALNANA. NAD(+) contacts are provided by residues 64-65, Asp-86, 135-138, 155-156, and Asn-184; these read ER, WEWH, and EV. Substrate contacts are provided by residues Tyr-213, Arg-232, 244–247, and Tyr-326; that span reads YPTH. An NAD(+)-binding site is contributed by Tyr-244.

The protein belongs to the Gfo/Idh/MocA family. Glycosyl hydrolase 109 subfamily. NAD(+) serves as cofactor. Post-translationally, predicted to be exported by the Tat system. The position of the signal peptide cleavage has not been experimentally proven.

Its function is as follows. Glycosidase. The protein is Glycosyl hydrolase family 109 protein 1 of Shewanella sp. (strain ANA-3).